Consider the following 498-residue polypeptide: ATP synthase subunit beta, chloroplastic (498 aa).

172-179 contributes to the ATP binding site; it reads GGAGVGKT.

It belongs to the ATPase alpha/beta chains family. In terms of assembly, F-type ATPases have 2 components, CF(1) - the catalytic core - and CF(0) - the membrane proton channel. CF(1) has five subunits: alpha(3), beta(3), gamma(1), delta(1), epsilon(1). CF(0) has four main subunits: a(1), b(1), b'(1) and c(9-12).

Its subcellular location is the plastid. It is found in the chloroplast thylakoid membrane. The enzyme catalyses ATP + H2O + 4 H(+)(in) = ADP + phosphate + 5 H(+)(out). Its function is as follows. Produces ATP from ADP in the presence of a proton gradient across the membrane. The catalytic sites are hosted primarily by the beta subunits. This Agapanthus africanus (Lily of the Nile) protein is ATP synthase subunit beta, chloroplastic.